The chain runs to 573 residues: Urease subunit alpha (573 aa).

The Urease domain occupies glycine 136–phenylalanine 573. The Ni(2+) site is built by histidine 141, histidine 143, and lysine 224. Lysine 224 carries the post-translational modification N6-carboxylysine. Histidine 226 contacts substrate. Ni(2+)-binding residues include histidine 253 and histidine 279. Residue histidine 327 is the Proton donor of the active site. Residue aspartate 367 coordinates Ni(2+).

It belongs to the metallo-dependent hydrolases superfamily. Urease alpha subunit family. In terms of assembly, heterotrimer of UreA (gamma), UreB (beta) and UreC (alpha) subunits. Three heterotrimers associate to form the active enzyme. Requires Ni cation as cofactor. Carboxylation allows a single lysine to coordinate two nickel ions.

It is found in the cytoplasm. The catalysed reaction is urea + 2 H2O + H(+) = hydrogencarbonate + 2 NH4(+). It participates in nitrogen metabolism; urea degradation; CO(2) and NH(3) from urea (urease route): step 1/1. The chain is Urease subunit alpha from Mycolicibacterium vanbaalenii (strain DSM 7251 / JCM 13017 / BCRC 16820 / KCTC 9966 / NRRL B-24157 / PYR-1) (Mycobacterium vanbaalenii).